A 301-amino-acid polypeptide reads, in one-letter code: GTPase Era (301 aa).

In terms of domain architecture, Era-type G spans 4–173 (KAGFVALIGK…LECISKHLNP (170 aa)). The interval 12–19 (GKPNAGKS) is G1. Residue 12-19 (GKPNAGKS) participates in GTP binding. Residues 38–42 (NATRK) form a G2 region. A G3 region spans residues 64-67 (DTPG). GTP contacts are provided by residues 64-68 (DTPGL) and 122-125 (SKID). Positions 122 to 125 (SKID) are G4. A G5 region spans residues 152–154 (LSA). Residues 204–280 (LSDEIPYESD…FLNLQVIAQK (77 aa)) form the KH type-2 domain.

This sequence belongs to the TRAFAC class TrmE-Era-EngA-EngB-Septin-like GTPase superfamily. Era GTPase family. In terms of assembly, monomer.

Its subcellular location is the cytoplasm. The protein resides in the cell inner membrane. An essential GTPase that binds both GDP and GTP, with rapid nucleotide exchange. Plays a role in 16S rRNA processing and 30S ribosomal subunit biogenesis and possibly also in cell cycle regulation and energy metabolism. The polypeptide is GTPase Era (Helicobacter pylori (strain P12)).